Consider the following 715-residue polypeptide: Probable GTP diphosphokinase RSH3, chloroplastic (715 aa).

Residues 1–64 (MVVATTIALY…LLFSGASVKS (64 aa)) constitute a chloroplast transit peptide. A compositionally biased stretch (low complexity) spans 65–74 (SSSSSSSHPS). A disordered region spans residues 65–84 (SSSSSSSHPSVGEELASIRH). An HD domain is found at 237 to 341 (YLQHCVETAM…IKLADRLHNM (105 aa)).

The protein belongs to the RelA/SpoT family. In terms of tissue distribution, expressed in roots, hypocotyls, shoots, cotyledons, rosette and cauline leaves, stems, petals, sepals, stamens, pistils and siliques.

It localises to the plastid. The protein resides in the chloroplast. It catalyses the reaction GTP + ATP = guanosine 3'-diphosphate 5'-triphosphate + AMP. Possesses ppGpp (guanosine 3'-diphosphate 5'-diphosphate) synthetase activity in vitro and is able to functionally complement E.coli relA mutants. May be involved in a rapid plant ppGpp-mediated response to pathogens and other stresses. This chain is Probable GTP diphosphokinase RSH3, chloroplastic (RSH3), found in Arabidopsis thaliana (Mouse-ear cress).